A 448-amino-acid chain; its full sequence is UDP-N-acetylmuramoylalanine--D-glutamate ligase (448 aa).

112–118 (GSNAKST) lines the ATP pocket.

The protein belongs to the MurCDEF family.

Its subcellular location is the cytoplasm. It catalyses the reaction UDP-N-acetyl-alpha-D-muramoyl-L-alanine + D-glutamate + ATP = UDP-N-acetyl-alpha-D-muramoyl-L-alanyl-D-glutamate + ADP + phosphate + H(+). The protein operates within cell wall biogenesis; peptidoglycan biosynthesis. In terms of biological role, cell wall formation. Catalyzes the addition of glutamate to the nucleotide precursor UDP-N-acetylmuramoyl-L-alanine (UMA). This Acinetobacter baylyi (strain ATCC 33305 / BD413 / ADP1) protein is UDP-N-acetylmuramoylalanine--D-glutamate ligase.